The primary structure comprises 693 residues: Elongation factor G (693 aa).

The 275-residue stretch at 8-282 (EKTRNIGIMA…AVIDYLPSPL (275 aa)) folds into the tr-type G domain. GTP is bound by residues 17–24 (AHVDAGKT), 81–85 (DTPGH), and 135–138 (NKMD).

Belongs to the TRAFAC class translation factor GTPase superfamily. Classic translation factor GTPase family. EF-G/EF-2 subfamily.

It is found in the cytoplasm. Its function is as follows. Catalyzes the GTP-dependent ribosomal translocation step during translation elongation. During this step, the ribosome changes from the pre-translocational (PRE) to the post-translocational (POST) state as the newly formed A-site-bound peptidyl-tRNA and P-site-bound deacylated tRNA move to the P and E sites, respectively. Catalyzes the coordinated movement of the two tRNA molecules, the mRNA and conformational changes in the ribosome. In Streptococcus pneumoniae serotype 2 (strain D39 / NCTC 7466), this protein is Elongation factor G.